A 194-amino-acid chain; its full sequence is Cysteine and glycine-rich protein 3 (194 aa).

An interaction with TCAP region spans residues 1–5 (MPNWG). The region spanning 10 to 61 (CGACDKTVYHAEEIQCNGRSFHKTCFHCMACRKALDSTTVAAHESEIYCKVC) is the LIM zinc-binding 1 domain. Residues 64–69 (RKYGPK) carry the Nuclear localization signal motif. Residues 94–105 (QSPKPARAATTS) form an interaction with CLF2 region. 3 positions are modified to phosphoserine: S95, S111, and S153. One can recognise an LIM zinc-binding 2 domain in the interval 120-171 (CPRCGKSVYAAEKVMGGGKPWHKTCFPCAICGKSLESTNVTDKDGELYCKVC).

In terms of assembly, self-associates. Oligomeric in the cytoplasm and monomeric in the nucleus. Homooligomers preferentially form along the actin cytoskeleton. Interacts with TCAP, ACTN2 and NRAP. Interacts with LDHD, SPTB, MYOD1, MYOG, MYF6. Interacts with GLRX3 (via C-terminus); GLRX3 and calcineurin compete for interaction with CSRP3. Interacts with CFL2; the stoichiometry influences F-actin depolymerization and possibly two molecules of CFL2 can interact with one molecule of CSRP3 resulting in the highest functional impact; the interaction is stronger with phosphorylated CFL2. Post-translationally, phosphorylated by PKC/PRKCA. In terms of tissue distribution, high in striated muscle and adult heart.

The protein resides in the nucleus. The protein localises to the cytoplasm. Its subcellular location is the cytoskeleton. It localises to the myofibril. It is found in the sarcomere. The protein resides in the z line. In terms of biological role, positive regulator of myogenesis. Acts as a cofactor for myogenic bHLH transcription factors such as MYOD1, and probably MYOG and MYF6. Enhances the DNA-binding activity of the MYOD1:TCF3 isoform E47 complex and may promote formation of a functional MYOD1:TCF3 isoform E47:MEF2A complex involved in myogenesis. Plays a crucial and specific role in the organization of cytosolic structures in cardiomyocytes. Could play a role in mechanical stretch sensing. May be a scaffold protein that promotes the assembly of interacting proteins at Z-line structures. It is essential for calcineurin anchorage to the Z line. Required for stress-induced calcineurin-NFAT activation. The role in regulation of cytoskeleton dynamics by association with CFL2 is reported conflictingly. Proposed to contribute to the maintenance of muscle cell integrity through an actin-based mechanism. Can directly bind to actin filaments, cross-link actin filaments into bundles without polarity selectivity and protect them from dilution- and cofilin-mediated depolymerization; the function seems to involve its self-association. In vitro can inhibit PKC/PRKCA activity. Proposed to be involved in cardiac stress signaling by down-regulating excessive PKC/PRKCA signaling. This Rattus norvegicus (Rat) protein is Cysteine and glycine-rich protein 3 (Csrp3).